The primary structure comprises 249 residues: O-methyltransferase adaD (249 aa).

Residues 1-15 are compositionally biased toward low complexity; it reads MSSVTLTTTTTTTST. Residues 1 to 26 are disordered; the sequence is MSSVTLTTTTTTTSTPPKPTPKDEPQ.

The protein belongs to the methyltransferase superfamily.

It carries out the reaction 2-acetyl-3,4a,8,10,11,12a-hexahydroxy-1,4,4a,5,12,12a-hexahydrotetracene-1,12-dione + S-adenosyl-L-methionine = TAN-1612 + S-adenosyl-L-homocysteine + H(+). Its pathway is secondary metabolite biosynthesis. Functionally, O-methyltransferase; part of the gene cluster that mediates the biosynthesis of the linear tetracyclic TAN-1612 neuropeptide Y receptor antagonist. The decaketide backbone of TAN-1612 is synthesized by the non-reducing polyketide synthase adaA via condensation of one acetyl-CoA starter unit with 9 malonyl-CoA units. The FAD-dependent monooxygenase adaC then performs hydroxylation at C2 while the polaketide chain is still attached to the NRPKS adaA. The alpha-hydroxylation step at C2 appears to be crucial for the following C18-C1 Claisen cyclization and release of the C9-hydroxyl version of TAN-1612 from the NRPKS adaA, two steps performed by the lactamase-like protein adaB. Finally, the O-methyltransferase adaD performs the C9 O-methylation to complete the biosynthesis of TAN-1612. The protein is O-methyltransferase adaD of Aspergillus niger.